The sequence spans 471 residues: MEILCEDNTSLSSIPNSLMQVDGDSGLYRNDFNSRDANSSDASNWTIDGENRTNLSFEGYLPPTCLSILHLQEKNWSALLTAVVIILTIAGNILVIMAVSLEKKLQNATNYFLMSLAIADMLLGFLVMPVSMLTILYGYRWPLPSKLCAVWIYLDVLFSTASIMHLCAISLDRYVAIQNPIHHSRFNSRTKAFLKIIAVWTISVGVSMPIPVFGLQDDSKVFKQGSCLLADDNFVLIGSFVAFFIPLTIMVITYFLTIKSLQKEATLCVSDLSTRAKLASFSFLPQSSLSSEKLFQRSIHREPGSYTGRRTMQSISNEQKACKVLGIVFFLFVVMWCPFFITNIMAVICKESCNEHVIGALLNVFVWIGYLSSAVNPLVYTLFNKTYRSAFSRYIQCQYKENRKPLQLILVNTIPALAYKSSQLQAGQNKDSKEDAEPTDNDCSMVTLGKQQSEETCTDNINTVNEKVSCV.

At 1 to 80 (MEILCEDNTS…LQEKNWSALL (80 aa)) the chain is on the extracellular side. N-linked (GlcNAc...) asparagine glycosylation is found at Asn-8, Asn-38, Asn-44, Asn-51, and Asn-54. A helical membrane pass occupies residues 81–97 (TAVVIILTIAGNILVIM). Over 98–111 (AVSLEKKLQNATNY) the chain is Cytoplasmic. Residues 112 to 137 (FLMSLAIADMLLGFLVMPVSMLTILY) form a helical membrane-spanning segment. The Extracellular segment spans residues 138-146 (GYRWPLPSK). The helical transmembrane segment at 147-171 (LCAVWIYLDVLFSTASIMHLCAISL) threads the bilayer. Cys-148 and Cys-227 form a disulfide bridge. Asp-155 contributes to the serotonin binding site. A DRY motif; important for ligand-induced conformation changes motif is present at residues 172–174 (DRY). Over 172-191 (DRYVAIQNPIHHSRFNSRTK) the chain is Cytoplasmic. The chain crosses the membrane as a helical span at residues 192–215 (AFLKIIAVWTISVGVSMPIPVFGL). Residues 216–232 (QDDSKVFKQGSCLLADD) lie on the Extracellular side of the membrane. Residues 233–258 (NFVLIGSFVAFFIPLTIMVITYFLTI) traverse the membrane as a helical segment. Topologically, residues 259-322 (KSLQKEATLC…QSISNEQKAC (64 aa)) are cytoplasmic. A Phosphoserine modification is found at Ser-280. Residues 323–348 (KVLGIVFFLFVVMWCPFFITNIMAVI) traverse the membrane as a helical segment. Asn-343 is a binding site for serotonin. A disulfide bridge connects residues Cys-349 and Cys-353. Topologically, residues 349–356 (CKESCNEH) are extracellular. Residues 357 to 382 (VIGALLNVFVWIGYLSSAVNPLVYTL) form a helical membrane-spanning segment. The NPxxY motif; important for ligand-induced conformation changes and signaling signature appears at 376–380 (NPLVY). At 383 to 471 (FNKTYRSAFS…NTVNEKVSCV (89 aa)) the chain is on the cytoplasmic side. Residues 469-471 (SCV) carry the PDZ-binding motif.

It belongs to the G-protein coupled receptor 1 family. In terms of assembly, interacts (via C-terminus) with MPDZ and PATJ. May interact (via C-terminus) with MPP3, PRDX6, DLG4, DLG1, CASK, APBA1 and MAGI2. Interacts with GRM2 and DRD2; this may affect signaling.

The protein resides in the cell membrane. Its subcellular location is the cell projection. It localises to the dendrite. It is found in the axon. The protein localises to the cytoplasmic vesicle. The protein resides in the membrane. Its subcellular location is the caveola. It localises to the presynapse. With respect to regulation, G-protein coupled receptor activity is regulated by lipids: oleamide increases HTR2A-mediated activity. G-protein coupled receptor for 5-hydroxytryptamine (serotonin). Also functions as a receptor for various drugs and psychoactive substances, including mescaline, psilocybin, 1-(2,5-dimethoxy-4-iodophenyl)-2-aminopropane (DOI) and lysergic acid diethylamide (LSD). Ligand binding causes a conformation change that triggers signaling via guanine nucleotide-binding proteins (G proteins) and modulates the activity of downstream effectors. HTR2A is coupled to G(q)/G(11) G alpha proteins and activates phospholipase C-beta, releasing diacylglycerol (DAG) and inositol 1,4,5-trisphosphate (IP3) second messengers that modulate the activity of phosphatidylinositol 3-kinase and promote the release of Ca(2+) ions from intracellular stores, respectively. Beta-arrestin family members inhibit signaling via G proteins and mediate activation of alternative signaling pathways. Affects neural activity, perception, cognition and mood. Plays a role in the regulation of behavior, including responses to anxiogenic situations and psychoactive substances. Plays a role in intestinal smooth muscle contraction, and may play a role in arterial vasoconstriction. This Cricetulus griseus (Chinese hamster) protein is 5-hydroxytryptamine receptor 2A (HTR2A).